The primary structure comprises 94 residues: Co-chaperonin GroES (94 aa).

This sequence belongs to the GroES chaperonin family. As to quaternary structure, heptamer of 7 subunits arranged in a ring. Interacts with the chaperonin GroEL.

The protein localises to the cytoplasm. Its function is as follows. Together with the chaperonin GroEL, plays an essential role in assisting protein folding. The GroEL-GroES system forms a nano-cage that allows encapsulation of the non-native substrate proteins and provides a physical environment optimized to promote and accelerate protein folding. GroES binds to the apical surface of the GroEL ring, thereby capping the opening of the GroEL channel. The sequence is that of Co-chaperonin GroES from Limosilactobacillus reuteri (strain DSM 20016) (Lactobacillus reuteri).